We begin with the raw amino-acid sequence, 207 residues long: Ribosomal RNA small subunit methyltransferase G (207 aa).

S-adenosyl-L-methionine is bound by residues Gly73, Leu78, 124–125 (VE), and Arg139.

Belongs to the methyltransferase superfamily. RNA methyltransferase RsmG family.

The protein resides in the cytoplasm. It catalyses the reaction guanosine(527) in 16S rRNA + S-adenosyl-L-methionine = N(7)-methylguanosine(527) in 16S rRNA + S-adenosyl-L-homocysteine. Its function is as follows. Specifically methylates the N7 position of guanine in position 527 of 16S rRNA. The polypeptide is Ribosomal RNA small subunit methyltransferase G (Salmonella schwarzengrund (strain CVM19633)).